The sequence spans 218 residues: Probable transaldolase 2 (218 aa).

Catalysis depends on K83, which acts as the Schiff-base intermediate with substrate.

This sequence belongs to the transaldolase family. Type 3B subfamily.

The protein resides in the cytoplasm. It catalyses the reaction D-sedoheptulose 7-phosphate + D-glyceraldehyde 3-phosphate = D-erythrose 4-phosphate + beta-D-fructose 6-phosphate. The protein operates within carbohydrate degradation; pentose phosphate pathway; D-glyceraldehyde 3-phosphate and beta-D-fructose 6-phosphate from D-ribose 5-phosphate and D-xylulose 5-phosphate (non-oxidative stage): step 2/3. Transaldolase is important for the balance of metabolites in the pentose-phosphate pathway. This is Probable transaldolase 2 from Listeria innocua serovar 6a (strain ATCC BAA-680 / CLIP 11262).